Consider the following 701-residue polypeptide: Elongation factor G (701 aa).

Positions threonine 11–leucine 287 constitute a tr-type G domain. Residues alanine 20–threonine 27, aspartate 84–histidine 88, and asparagine 138–aspartate 141 contribute to the GTP site.

The protein belongs to the TRAFAC class translation factor GTPase superfamily. Classic translation factor GTPase family. EF-G/EF-2 subfamily.

The protein resides in the cytoplasm. Functionally, catalyzes the GTP-dependent ribosomal translocation step during translation elongation. During this step, the ribosome changes from the pre-translocational (PRE) to the post-translocational (POST) state as the newly formed A-site-bound peptidyl-tRNA and P-site-bound deacylated tRNA move to the P and E sites, respectively. Catalyzes the coordinated movement of the two tRNA molecules, the mRNA and conformational changes in the ribosome. In Mycobacterium leprae (strain Br4923), this protein is Elongation factor G.